Reading from the N-terminus, the 217-residue chain is Probable coenzyme A transferase subunit beta (217 aa).

The active site involves Glu-50.

The protein belongs to the 3-oxoacid CoA-transferase subunit B family. As to quaternary structure, heterodimer of a subunit alpha and a subunit beta.

The chain is Probable coenzyme A transferase subunit beta (yodR) from Bacillus subtilis (strain 168).